We begin with the raw amino-acid sequence, 148 residues long: Large ribosomal subunit protein uL13 (148 aa).

The segment at 128–148 is disordered; that stretch reads PEHPHQAQNPQPFEINAKVEK.

This sequence belongs to the universal ribosomal protein uL13 family. Part of the 50S ribosomal subunit.

Functionally, this protein is one of the early assembly proteins of the 50S ribosomal subunit, although it is not seen to bind rRNA by itself. It is important during the early stages of 50S assembly. The chain is Large ribosomal subunit protein uL13 from Saccharopolyspora erythraea (strain ATCC 11635 / DSM 40517 / JCM 4748 / NBRC 13426 / NCIMB 8594 / NRRL 2338).